Consider the following 477-residue polypeptide: Probable cytosolic Fe-S cluster assembly factor GK14772 (477 aa).

Cys23, Cys69, Cys72, Cys75, Cys188, Cys244, Cys396, and Cys400 together coordinate [4Fe-4S] cluster.

Belongs to the NARF family.

Functionally, component of the cytosolic iron-sulfur (Fe/S) protein assembly machinery. Required for maturation of extramitochondrial Fe/S proteins. The sequence is that of Probable cytosolic Fe-S cluster assembly factor GK14772 from Drosophila willistoni (Fruit fly).